Here is a 501-residue protein sequence, read N- to C-terminus: ATP synthase subunit alpha (501 aa).

Position 169–176 (169–176 (GDRQTGKT)) interacts with ATP.

This sequence belongs to the ATPase alpha/beta chains family. In terms of assembly, F-type ATPases have 2 components, CF(1) - the catalytic core - and CF(0) - the membrane proton channel. CF(1) has five subunits: alpha(3), beta(3), gamma(1), delta(1), epsilon(1). CF(0) has three main subunits: a(1), b(2) and c(9-12). The alpha and beta chains form an alternating ring which encloses part of the gamma chain. CF(1) is attached to CF(0) by a central stalk formed by the gamma and epsilon chains, while a peripheral stalk is formed by the delta and b chains.

Its subcellular location is the cell membrane. The enzyme catalyses ATP + H2O + 4 H(+)(in) = ADP + phosphate + 5 H(+)(out). Functionally, produces ATP from ADP in the presence of a proton gradient across the membrane. The alpha chain is a regulatory subunit. This is ATP synthase subunit alpha from Streptococcus uberis (strain ATCC BAA-854 / 0140J).